We begin with the raw amino-acid sequence, 508 residues long: Photosystem II CP47 reaction center protein (508 aa).

6 helical membrane-spanning segments follow: residues serine 21–serine 36, isoleucine 101–tryptophan 115, glycine 140–phenylalanine 156, isoleucine 203–serine 218, valine 237–valine 252, and serine 457–arginine 472.

Belongs to the PsbB/PsbC family. PsbB subfamily. In terms of assembly, PSII is composed of 1 copy each of membrane proteins PsbA, PsbB, PsbC, PsbD, PsbE, PsbF, PsbH, PsbI, PsbJ, PsbK, PsbL, PsbM, PsbT, PsbX, PsbY, PsbZ, Psb30/Ycf12, at least 3 peripheral proteins of the oxygen-evolving complex and a large number of cofactors. It forms dimeric complexes. Requires Binds multiple chlorophylls. PSII binds additional chlorophylls, carotenoids and specific lipids. as cofactor.

The protein resides in the plastid. Its subcellular location is the chloroplast thylakoid membrane. Functionally, one of the components of the core complex of photosystem II (PSII). It binds chlorophyll and helps catalyze the primary light-induced photochemical processes of PSII. PSII is a light-driven water:plastoquinone oxidoreductase, using light energy to abstract electrons from H(2)O, generating O(2) and a proton gradient subsequently used for ATP formation. The chain is Photosystem II CP47 reaction center protein from Platanus occidentalis (Sycamore).